Reading from the N-terminus, the 501-residue chain is Glucan endo-1,3-beta-glucosidase 3 (501 aa).

The N-terminal stretch at 1–18 is a signal peptide; the sequence is MAALLLLFLFLFASSALS. N-linked (GlcNAc...) asparagine glycans are attached at residues Asn88 and Asn107. The Proton donor role is filled by Glu116. N-linked (GlcNAc...) asparagine glycosylation is found at Asn171 and Asn253. Glu263 functions as the Nucleophile in the catalytic mechanism. 3 N-linked (GlcNAc...) asparagine glycosylation sites follow: Asn295, Asn353, and Asn357. Cys361 and Cys424 are oxidised to a cystine. 4 N-linked (GlcNAc...) asparagine glycosylation sites follow: Asn451, Asn456, Asn457, and Asn466. Ser470 carries the GPI-anchor amidated serine lipid modification. Residues 471–501 constitute a propeptide, removed in mature form; it reads GCIPKYYHHPHASFGDLTLLSLLLIIALVFL.

The protein belongs to the glycosyl hydrolase 17 family. Post-translationally, contains two additional disulfide bonds.

It localises to the cell membrane. It catalyses the reaction Hydrolysis of (1-&gt;3)-beta-D-glucosidic linkages in (1-&gt;3)-beta-D-glucans.. The sequence is that of Glucan endo-1,3-beta-glucosidase 3 from Arabidopsis thaliana (Mouse-ear cress).